Consider the following 83-residue polypeptide: Short neurotoxin 3FTx-Oxy4 (83 aa).

The N-terminal stretch at 1–21 (MKTLLLTLVVVTIVCLDLGYT) is a signal peptide. 4 cysteine pairs are disulfide-bonded: C24-C45, C38-C62, C64-C75, and C76-C81.

This sequence belongs to the three-finger toxin family. Short-chain subfamily. Type I alpha-neurotoxin sub-subfamily. In terms of tissue distribution, expressed by the venom gland.

It is found in the secreted. In terms of biological role, binds to muscle nicotinic acetylcholine receptor (nAChR) and inhibit acetylcholine from binding to the receptor, thereby impairing neuromuscular transmission. This chain is Short neurotoxin 3FTx-Oxy4, found in Oxyuranus microlepidotus (Inland taipan).